Reading from the N-terminus, the 285-residue chain is Probable endonuclease 4 (285 aa).

Histidine 69, histidine 109, glutamate 145, aspartate 179, histidine 182, histidine 216, aspartate 229, histidine 231, and glutamate 261 together coordinate Zn(2+).

Belongs to the AP endonuclease 2 family. Zn(2+) serves as cofactor.

The catalysed reaction is Endonucleolytic cleavage to 5'-phosphooligonucleotide end-products.. Its function is as follows. Endonuclease IV plays a role in DNA repair. It cleaves phosphodiester bonds at apurinic or apyrimidinic (AP) sites, generating a 3'-hydroxyl group and a 5'-terminal sugar phosphate. This Salmonella schwarzengrund (strain CVM19633) protein is Probable endonuclease 4.